The sequence spans 64 residues: Prokaryotic ubiquitin-like protein Pup (64 aa).

The disordered stretch occupies residues 1–37 (MAQEQTKRGGGGGEDDDLTGSTAAGQERREKLTDETD). Positions 21–58 (STAAGQERREKLTDETDDLLDEIDDVLEENAEDFVRAY) are ARC ATPase binding. A coiled-coil region spans residues 23–52 (AAGQERREKLTDETDDLLDEIDDVLEENAE). Residue Q64 is modified to Deamidated glutamine. Residue Q64 forms an Isoglutamyl lysine isopeptide (Gln-Lys) (interchain with K-? in acceptor proteins) linkage.

It belongs to the prokaryotic ubiquitin-like protein family. As to quaternary structure, strongly interacts with the proteasome-associated ATPase ARC through a hydrophobic interface; the interacting region of Pup lies in its C-terminal half. There is one Pup binding site per ARC hexamer ring. Is modified by deamidation of its C-terminal glutamine to glutamate by the deamidase Dop, a prerequisite to the subsequent pupylation process.

The protein operates within protein degradation; proteasomal Pup-dependent pathway. Functionally, protein modifier that is covalently attached to lysine residues of substrate proteins, thereby targeting them for proteasomal degradation. The tagging system is termed pupylation. This is Prokaryotic ubiquitin-like protein Pup from Mycolicibacterium vanbaalenii (strain DSM 7251 / JCM 13017 / BCRC 16820 / KCTC 9966 / NRRL B-24157 / PYR-1) (Mycobacterium vanbaalenii).